Here is a 128-residue protein sequence, read N- to C-terminus: Cytochrome c-type biogenesis protein CcmE (128 aa).

At 1–8 the chain is on the cytoplasmic side; sequence MQKRVRNR. The helical; Signal-anchor for type II membrane protein transmembrane segment at 9–29 threads the bilayer; sequence LITIIICFCSACLGISIILYN. Topologically, residues 30-128 are extracellular; it reads LEKNIVFFLP…KHDENYRPPQ (99 aa). Heme-binding residues include H120 and Y124.

The protein belongs to the CcmE/CycJ family.

It localises to the cell membrane. Heme chaperone required for the biogenesis of c-type cytochromes. Transiently binds heme delivered by CcmC and transfers the heme to apo-cytochromes in a process facilitated by CcmF and CcmH. The chain is Cytochrome c-type biogenesis protein CcmE from Rickettsia africae (strain ESF-5).